We begin with the raw amino-acid sequence, 569 residues long: Proline--tRNA ligase (569 aa).

Belongs to the class-II aminoacyl-tRNA synthetase family. ProS type 1 subfamily. As to quaternary structure, homodimer.

It is found in the cytoplasm. The catalysed reaction is tRNA(Pro) + L-proline + ATP = L-prolyl-tRNA(Pro) + AMP + diphosphate. Catalyzes the attachment of proline to tRNA(Pro) in a two-step reaction: proline is first activated by ATP to form Pro-AMP and then transferred to the acceptor end of tRNA(Pro). As ProRS can inadvertently accommodate and process non-cognate amino acids such as alanine and cysteine, to avoid such errors it has two additional distinct editing activities against alanine. One activity is designated as 'pretransfer' editing and involves the tRNA(Pro)-independent hydrolysis of activated Ala-AMP. The other activity is designated 'posttransfer' editing and involves deacylation of mischarged Ala-tRNA(Pro). The misacylated Cys-tRNA(Pro) is not edited by ProRS. The sequence is that of Proline--tRNA ligase from Shewanella woodyi (strain ATCC 51908 / MS32).